Consider the following 339-residue polypeptide: Hairy/enhancer-of-split related with YRPW motif protein 2 (339 aa).

The tract at residues 1 to 52 (MKRPCEETTSESDLDETIDVGSENNYPGHATSSVMRSNSPTTTSQIMARKKR) is disordered. Over residues 8–18 (TTSESDLDETI) the composition is skewed to acidic residues. The span at 22-46 (SENNYPGHATSSVMRSNSPTTTSQI) shows a compositional bias: polar residues. Residues 47–116 (MARKKRRGII…GGKGYFDAHA (70 aa)) are transcriptional repression and interaction with NCOR1 and SIN3A. Residues 48-103 (ARKKRRGIIEKRRRDRINNSLSELRRLVPTAFEKQGSAKLEKAEILQMTVDHLKML) enclose the bHLH domain. One can recognise an Orange domain in the interval 122–157 (MSIGFRECLTEVARYLSSVEGLDPSDPLRVRLVSHL). A disordered region spans residues 310-339 (SVSAASSPQQTSTGTNNKPYQPWGTEVGAF). Residues 318 to 328 (QQTSTGTNNKP) are compositionally biased toward polar residues. The short motif at 329–332 (YQPW) is the YQPW motif element.

Belongs to the HEY family. May self-associate. Interacts with ARNT. Interacts with GATA4, GATA6, HES1 and HEYL. Interacts with HDAC1, NCOR1 and SIN3A. Highly expressed in the aorta, lower expression detected in the heart, brain, kidney, lung, muscle, ovary and testis.

Its subcellular location is the nucleus. Functionally, transcriptional repressor which functions as a downstream effector of Notch signaling in cardiovascular development. Specifically required for the Notch-induced endocardial epithelial to mesenchymal transition, which is itself criticial for cardiac valve and septum development. May be required in conjunction with HEY1 to specify arterial cell fate or identity. Promotes maintenance of neuronal precursor cells and glial versus neuronal fate specification. Binds preferentially to the canonical E box sequence 5'-CACGTG-3'. Represses transcription by the cardiac transcriptional activators GATA4 and GATA6 and by the neuronal bHLH factors ASCL1/MASH1 and NEUROD4/MATH3. This is Hairy/enhancer-of-split related with YRPW motif protein 2 (Hey2) from Mus musculus (Mouse).